We begin with the raw amino-acid sequence, 284 residues long: 2-dehydro-3-deoxyphosphooctonate aldolase (284 aa).

This sequence belongs to the KdsA family.

The protein resides in the cytoplasm. The catalysed reaction is D-arabinose 5-phosphate + phosphoenolpyruvate + H2O = 3-deoxy-alpha-D-manno-2-octulosonate-8-phosphate + phosphate. The protein operates within carbohydrate biosynthesis; 3-deoxy-D-manno-octulosonate biosynthesis; 3-deoxy-D-manno-octulosonate from D-ribulose 5-phosphate: step 2/3. It functions in the pathway bacterial outer membrane biogenesis; lipopolysaccharide biosynthesis. The chain is 2-dehydro-3-deoxyphosphooctonate aldolase from Actinobacillus pleuropneumoniae serotype 7 (strain AP76).